A 187-amino-acid polypeptide reads, in one-letter code: Small ribosomal subunit protein uS5 (187 aa).

The S5 DRBM domain maps to 20 to 83; it reads FADRLVAINR…EQAKRQMIRV (64 aa). The interval 155-187 is disordered; the sequence is KKEQSPRSVAQRRGKKVADILPKRDEAPAEAEA. Residues 170–181 are compositionally biased toward basic and acidic residues; it reads KVADILPKRDEA.

It belongs to the universal ribosomal protein uS5 family. As to quaternary structure, part of the 30S ribosomal subunit. Contacts proteins S4 and S8.

Its function is as follows. With S4 and S12 plays an important role in translational accuracy. Functionally, located at the back of the 30S subunit body where it stabilizes the conformation of the head with respect to the body. The protein is Small ribosomal subunit protein uS5 of Ruegeria sp. (strain TM1040) (Silicibacter sp.).